Reading from the N-terminus, the 294-residue chain is Lysozyme M1 (294 aa).

In terms of domain architecture, Ch-type lysozyme spans 81-294 (GVQGIDVSHW…RLLALANNTA (214 aa)). Active-site residues include Asp86, Asp175, and Glu177. A disulfide bridge links Cys185 with Cys224.

Belongs to the glycosyl hydrolase 25 family.

It is found in the secreted. It catalyses the reaction Hydrolysis of (1-&gt;4)-beta-linkages between N-acetylmuramic acid and N-acetyl-D-glucosamine residues in a peptidoglycan and between N-acetyl-D-glucosamine residues in chitodextrins.. Its function is as follows. This enzyme has both lysozyme (acetylmuramidase) and diacetylmuramidase activities. The sequence is that of Lysozyme M1 (acm) from Streptomyces globisporus.